Consider the following 549-residue polypeptide: Cytochrome c oxidase subunit 1 (549 aa).

A helical transmembrane segment spans residues 18–38 (LCYLLVAILSGFVGYVYSLFI). Ca(2+) contacts are provided by E41 and G46. A helical transmembrane segment spans residues 42–62 (LSLIGCGILFGDYQFYNVLIT). H64 provides a ligand contact to Fe(II)-heme a. The next 5 helical transmembrane spans lie at 66-86 (LIMV…NYFI), 100-120 (LNNM…NGFL), 148-168 (FVMF…INLL), 186-206 (LFIW…PVLA), and 222-242 (FYDV…WFFG). H243 lines the Cu cation pocket. Positions 243 to 247 (HPEVY) form a cross-link, 1'-histidyl-3'-tyrosine (His-Tyr). Transmembrane regions (helical) follow at residues 246 to 266 (VYII…VIGF) and 269 to 289 (VFST…GMFV). Position 247 (Y247) interacts with O2. Residues H292 and H293 each coordinate Cu cation. The next 2 membrane-spanning stretches (helical) occupy residues 306 to 326 (YFGG…FNWI) and 340 to 360 (VYFV…GLFL). Residues H370 and D371 each contribute to the Mg(2+) site. H378 provides a ligand contact to heme a3. Helical transmembrane passes span 379–399 (FHYV…IHFL), 402–422 (WLPI…LFIG), 460–480 (MLLL…FLFW), 484–504 (LFFV…STWL), and 520–540 (IVLD…IFFW). H380 contacts Fe(II)-heme a.

It belongs to the heme-copper respiratory oxidase family. Component of the cytochrome c oxidase (complex IV, CIV), a multisubunit enzyme composed of a catalytic core of 3 subunits and several supernumerary subunits. The complex exists as a monomer or a dimer and forms supercomplexes (SCs) in the inner mitochondrial membrane with ubiquinol-cytochrome c oxidoreductase (cytochrome b-c1 complex, complex III, CIII). Heme serves as cofactor. Requires Cu cation as cofactor.

It localises to the mitochondrion inner membrane. The enzyme catalyses 4 Fe(II)-[cytochrome c] + O2 + 8 H(+)(in) = 4 Fe(III)-[cytochrome c] + 2 H2O + 4 H(+)(out). Its pathway is energy metabolism; oxidative phosphorylation. Component of the cytochrome c oxidase, the last enzyme in the mitochondrial electron transport chain which drives oxidative phosphorylation. The respiratory chain contains 3 multisubunit complexes succinate dehydrogenase (complex II, CII), ubiquinol-cytochrome c oxidoreductase (cytochrome b-c1 complex, complex III, CIII) and cytochrome c oxidase (complex IV, CIV), that cooperate to transfer electrons derived from NADH and succinate to molecular oxygen, creating an electrochemical gradient over the inner membrane that drives transmembrane transport and the ATP synthase. Cytochrome c oxidase is the component of the respiratory chain that catalyzes the reduction of oxygen to water. Electrons originating from reduced cytochrome c in the intermembrane space (IMS) are transferred via the dinuclear copper A center (CU(A)) of subunit 2 and heme A of subunit 1 to the active site in subunit 1, a binuclear center (BNC) formed by heme A3 and copper B (CU(B)). The BNC reduces molecular oxygen to 2 water molecules using 4 electrons from cytochrome c in the IMS and 4 protons from the mitochondrial matrix. The protein is Cytochrome c oxidase subunit 1 (COI) of Leishmania tarentolae (Sauroleishmania tarentolae).